Here is a 180-residue protein sequence, read N- to C-terminus: FMN reductase (NADH) RutF (180 aa).

It belongs to the non-flavoprotein flavin reductase family. RutF subfamily.

The catalysed reaction is FMNH2 + NAD(+) = FMN + NADH + 2 H(+). Catalyzes the reduction of FMN to FMNH2 which is used to reduce pyrimidine by RutA via the Rut pathway. This Bradyrhizobium diazoefficiens (strain JCM 10833 / BCRC 13528 / IAM 13628 / NBRC 14792 / USDA 110) protein is FMN reductase (NADH) RutF.